We begin with the raw amino-acid sequence, 131 residues long: T3C protein (131 aa).

The polypeptide is T3C protein (Ovis aries (Sheep)).